Here is a 993-residue protein sequence, read N- to C-terminus: UPF0182 protein Sare_4110 (993 aa).

Transmembrane regions (helical) follow at residues 18 to 38 (IGVL…VQAW), 61 to 81 (LLLF…NLWL), 110 to 130 (LGTW…LSAQ), 171 to 191 (GVAF…HYVF), 209 to 229 (AHLS…YVLD), 260 to 280 (ILAY…NAWM), and 283 to 303 (LVWP…IGGI). Disordered stretches follow at residues 892–937 (QGEK…ADAA) and 974–993 (EQAA…SPGG). A compositionally biased stretch (pro residues) spans 900-929 (STPPPSGETPAPTPTPTPTPSSPSVTPPPV). Positions 976–993 (AAGPGSAATPTGSPSPGG) are enriched in low complexity.

The protein belongs to the UPF0182 family.

It localises to the cell membrane. This is UPF0182 protein Sare_4110 from Salinispora arenicola (strain CNS-205).